Reading from the N-terminus, the 466-residue chain is Reticulophagy regulator 3 (466 aa).

Residues 1–80 (MEEAEGVAAA…WCLGLNAAFW (80 aa)) are Cytoplasmic-facing. Ser-26 bears the Phosphoserine mark. Residues 81 to 101 (FFALTSLRFVFLLAFSLMIIV) traverse the membrane as a helical segment. At 102–168 (CIDQWKNKIW…LLFKKQNPGK (67 aa)) the chain is on the lumenal side. The helical transmembrane segment at 169-187 (FCLLSCGVLTFLAMLGRYI) threads the bilayer. The Cytoplasmic segment spans residues 188-192 (PGLLL). Residues 193–211 (SYLMLVIIMMWPLAVYHRL) form a helical membrane-spanning segment. Residues 212 to 381 (WDRAYVRLKP…ASRNEAALPE (170 aa)) lie on the Lumenal side of the membrane. The disordered stretch occupies residues 244 to 263 (RRRALHSERATDSHSDSEEE). Over residues 248-259 (LHSERATDSHSD) the composition is skewed to basic and acidic residues. Thr-254 bears the Phosphothreonine mark. Phosphoserine is present on residues Ser-258 and Ser-260. Thr-283 is subject to Phosphothreonine. Ser-285, Ser-288, Ser-293, and Ser-303 each carry phosphoserine. Residues 285-335 (SEHSDAEVSCTENGTFNLSRGQTPLTEGSEDLDGHSDPEESFARDLPDFPS) are disordered. Residues 294-310 (CTENGTFNLSRGQTPLT) show a composition bias toward polar residues. Phosphothreonine occurs at positions 307 and 310. Phosphoserine is present on residues Ser-313, Ser-320, and Ser-360. Over residues 316–331 (LDGHSDPEESFARDLP) the composition is skewed to basic and acidic residues. The helical transmembrane segment at 382–401 (LLLSSLPGGSNLTSNLASLV) threads the bilayer. Over 402–466 (SQGMIQLALS…QLDPASSRSH (65 aa)) the chain is Cytoplasmic. Residues 412-444 (EASQTDPSGPPPRRATRGFLRAPSSDLDTDAEG) are disordered. Position 440 is a phosphothreonine (Thr-440). Residues 445–450 (DDFELL) carry the LIR motif motif.

This sequence belongs to the RETREG family. Interacts with ATG8 family modifier proteins MAP1LC3A, MAP1LC3B, GABARAPL1 and GABARAPL2. Also interacts with ATG8 family modifier protein GABARAP. Interacts with CANX. Interacts with RTN4 isoform B. Widely expressed with highest levels in brain, lung, liver, muscle and spleen (protein level). Mainly expressed in the central nervous system and in parenchymatous organs including liver, lung and kidney.

It is found in the endoplasmic reticulum membrane. Endoplasmic reticulum (ER)-anchored autophagy regulator which exists in an inactive state under basal conditions but is activated following cellular stress. When activated, induces ER fragmentation and mediates ER delivery into lysosomes through sequestration into autophagosomes via interaction with ATG8 family proteins. Promotes ER membrane curvature and ER tubulation required for subsequent ER fragmentation and engulfment into autophagosomes. Required for collagen quality control in a LIR motif-dependent manner. Mediates NRF1-enhanced neurite outgrowth. This chain is Reticulophagy regulator 3 (Retreg3), found in Mus musculus (Mouse).